The chain runs to 175 residues: Anterior gradient protein 2 homolog (175 aa).

The N-terminal stretch at 1-20 (MEKIPVSAFLLLVALSYTLA) is a signal peptide. Residues 21 to 40 (RDTTVKPGAKKDTKDSRPKL) form a required to promote cell adhesion region. 2 consecutive short sequence motifs (homodimer stabilization; interchain) follow at residues 45 to 54 (SRGWGDQLIW) and 60 to 67 (EALYKSKT).

Belongs to the AGR family. As to quaternary structure, monomer and homodimer. Interacts with LYPD3 and DAG1 (alphaDAG1). Interacts with MUC2; disulfide-linked. As to expression, expressed strongly in trachea, lung, stomach, colon, prostate and small intestine. Expressed weakly in pituitary gland, salivary gland, mammary gland, bladder, appendix, ovary, fetal lung, uterus, pancreas, kidney, fetal kidney, testis, placenta, thyroid gland and in estrogen receptor (ER)-positive breast cancer cell lines.

The protein localises to the secreted. It is found in the endoplasmic reticulum. In terms of biological role, required for MUC2 post-transcriptional synthesis and secretion. May play a role in the production of mucus by intestinal cells. Proto-oncogene that may play a role in cell migration, cell differentiation and cell growth. Promotes cell adhesion. The sequence is that of Anterior gradient protein 2 homolog (AGR2) from Homo sapiens (Human).